A 115-amino-acid chain; its full sequence is Large ribosomal subunit protein bL20 (115 aa).

This sequence belongs to the bacterial ribosomal protein bL20 family.

Binds directly to 23S ribosomal RNA and is necessary for the in vitro assembly process of the 50S ribosomal subunit. It is not involved in the protein synthesizing functions of that subunit. The sequence is that of Large ribosomal subunit protein bL20 from Borrelia duttonii (strain Ly).